The following is a 309-amino-acid chain: Taste receptor type 2 member 20 (309 aa).

Over 1-6 (MMSFLH) the chain is Extracellular. The chain crosses the membrane as a helical span at residues 7–27 (IVFSILVVVAFILGNFANGFI). The Cytoplasmic portion of the chain corresponds to 28–46 (ALINFIAWVKRQKISSADQ). Residues 47-67 (IIAALAVSRVGLLWVILLHWY) traverse the membrane as a helical segment. The Extracellular segment spans residues 68-79 (STVLNPTSSNLK). Residues 80 to 100 (VIIFISNAWAVTNHFSIWLAT) form a helical membrane-spanning segment. At 101-125 (SLSIFYLLKIVNFSRLIFHHLKRKA) the chain is on the cytoplasmic side. Residues 126-146 (KSVVLVIVLGSLFFLVCHLVM) form a helical membrane-spanning segment. Residues 147 to 178 (KNTYINVWTEECEGNVTWKIKLRNAMHLSNLT) lie on the Extracellular side of the membrane. A helical transmembrane segment spans residues 179–199 (VAMLANLIPFTLTLISFLLLI). The Cytoplasmic segment spans residues 200–229 (YSLCKHLKKMQLHGKGSQDPSTKIHIKALQ). The helical transmembrane segment at 230-250 (TVTSFLILLAIYFLCLITSFW) threads the bilayer. Residues 251 to 259 (NSKMRPKEI) lie on the Extracellular side of the membrane. A helical membrane pass occupies residues 260-280 (VLMLCQAFGIIYPSFHSFILI). Residues 281–309 (WGNKTLKQTFLSVLWQVTCWAKGQNQSTP) lie on the Cytoplasmic side of the membrane.

Belongs to the G-protein coupled receptor T2R family.

Its subcellular location is the membrane. Its function is as follows. Receptor that may play a role in the perception of bitterness and is gustducin-linked. May play a role in sensing the chemical composition of the gastrointestinal content. The activity of this receptor may stimulate alpha gustducin, mediate PLC-beta-2 activation and lead to the gating of TRPM5. The polypeptide is Taste receptor type 2 member 20 (TAS2R20) (Pan paniscus (Pygmy chimpanzee)).